The following is a 1574-amino-acid chain: Disco-interacting protein 2 homolog B (1574 aa).

Phosphoserine is present on residues serine 9, serine 50, and serine 53. Positions 12-130 (AVAALPPEVR…PMPTKRRSTF (119 aa)) constitute a DMAP1-binding domain. The interval 31–166 (LSEGDITQKG…AALSAALQQS (136 aa)) is disordered. Residues 52–62 (YSPQTQETDSI) show a composition bias toward polar residues. Positions 69-82 (QTPAPTAAQTSAPS) are enriched in low complexity. Residue threonine 70 is modified to Phosphothreonine. The span at 91-103 (GARDERYRSDIHT) shows a compositional bias: basic and acidic residues. The residue at position 99 (serine 99) is a Phosphoserine. Threonine 139 is subject to Phosphothreonine. Serine 145, serine 147, and serine 152 each carry phosphoserine. Residues 154–166 (RRQAALSAALQQS) are compositionally biased toward low complexity. Phosphoserine is present on residues serine 177, serine 192, and serine 202. The segment at 178–200 (IQGSSTSSSASSTLSHGEVKGTS) is disordered. Residues 181–192 (SSTSSSASSTLS) show a composition bias toward low complexity. Positions 217 to 244 (APPDVTATTSSSSSSLRPANIDLPPSGI) are disordered. Serine 256 is subject to Phosphoserine.

This sequence belongs to the DIP2 family. Interacts with alpha-tubulin. As to expression, highly expressed in brain and spinal cord (at protein level). In brain, expression is detected in the main olfactory bulb, cortex, lateral ventricle, cornu ammonis 1, cornu ammonis 3, dentate gyrus, striatum, cerebellar cortex and medial habenula. Expressed primarily in neurons including excitatory pyramidal neurons and inhibitory interneurons.

The protein localises to the cell projection. It localises to the dendrite. The protein resides in the axon. It is found in the perikaryon. Negatively regulates axonal outgrowth and is essential for normal synaptic transmission. Not required for regulation of axon polarity. Promotes acetylation of alpha-tubulin. The chain is Disco-interacting protein 2 homolog B (Dip2b) from Mus musculus (Mouse).